The following is a 468-amino-acid chain: Nuclear receptor ROR-alpha A (468 aa).

Positions 15–90 form a DNA-binding region, nuclear receptor; the sequence is IIPCKICGDK…VGMSRDAVKF (76 aa). 2 NR C4-type zinc fingers span residues 18–38 and 54–73; these read CKIC…CEGC and CPRQ…CQHC. 2 disordered regions span residues 101 to 129 and 142 to 163; these read LYAE…PLTP and HDDL…DSGV. The 239-residue stretch at 217-455 folds into the NR LBD domain; the sequence is ELEHLAQNIS…AHFPPLYKEL (239 aa). The tract at residues 444–455 is AF-2; sequence VRAHFPPLYKEL.

This sequence belongs to the nuclear hormone receptor family. NR1 subfamily. As to expression, expressed in the brain, in cerebellar-like structures, including Purkinje cells.

It is found in the nucleus. Nuclear receptor that binds DNA as a monomer to ROR response elements (RORE). Required for proper cerebellum development. This is Nuclear receptor ROR-alpha A (roraa) from Danio rerio (Zebrafish).